The chain runs to 337 residues: Viral cathepsin (337 aa).

Positions 1–18 (MYLIYYYTIIAVATASIA) are cleaved as a signal peptide. Residues 19 to 126 (NEKIFYDIDS…VTVAGPSART (108 aa)) constitute a propeptide, activation peptide. 3 disulfides stabilise this stretch: Cys-147/Cys-188, Cys-181/Cys-221, and Cys-276/Cys-324. Cys-150 is a catalytic residue. Catalysis depends on residues His-283 and Asn-303.

It belongs to the peptidase C1 family. In terms of processing, synthesized as an inactive proenzyme and activated by proteolytic removal of the inhibitory propeptide.

The catalysed reaction is Endopeptidase of broad specificity, hydrolyzing substrates of both cathepsin L and cathepsin B.. Functionally, cysteine protease that plays an essential role in host liquefaction to facilitate horizontal transmission of the virus. May participate in the degradation of foreign protein expressed by the baculovirus system. The protein is Viral cathepsin (VCATH) of Spodoptera litura multicapsid nucleopolyhedrovirus (SpltMNPV).